The chain runs to 509 residues: Lysine--tRNA ligase (509 aa).

2 residues coordinate Mg(2+): glutamate 418 and glutamate 425.

This sequence belongs to the class-II aminoacyl-tRNA synthetase family. Homodimer. The cofactor is Mg(2+).

The protein localises to the cytoplasm. It catalyses the reaction tRNA(Lys) + L-lysine + ATP = L-lysyl-tRNA(Lys) + AMP + diphosphate. The sequence is that of Lysine--tRNA ligase from Acinetobacter baumannii (strain ATCC 17978 / DSM 105126 / CIP 53.77 / LMG 1025 / NCDC KC755 / 5377).